We begin with the raw amino-acid sequence, 313 residues long: Metal ABC transporter substrate-binding lipoprotein (313 aa).

The signal sequence occupies residues 1-23; sequence MIEKYKNILITFIALAAIVFLVG. Cys24 carries the N-palmitoyl cysteine lipid modification. Residue Cys24 is the site of S-diacylglycerol cysteine attachment. Zn(2+) contacts are provided by His71, His143, Glu209, and Asp284.

This sequence belongs to the bacterial solute-binding protein 9 family. Lipoprotein receptor antigen (Lrai) subfamily.

It localises to the cell membrane. Functionally, part of an ATP-driven transport system for a metal; probably for manganese. This chain is Metal ABC transporter substrate-binding lipoprotein (mtsA), found in Lactococcus lactis subsp. lactis (strain IL1403) (Streptococcus lactis).